A 468-amino-acid chain; its full sequence is Mannan endo-1,4-beta-mannosidase 3 (468 aa).

Residues 1–23 form the signal peptide; that stretch reads MTVRPRPAAAAIIIAAVFGAAAA. Trp-86 provides a ligand contact to substrate. An N-linked (GlcNAc...) asparagine glycan is attached at Asn-152. Asn-201 lines the substrate pocket. Glu-202 acts as the Proton donor in catalysis. Tyr-281 provides a ligand contact to substrate. A glycan (N-linked (GlcNAc...) asparagine) is linked at Asn-300. Catalysis depends on Glu-321, which acts as the Nucleophile. The N-linked (GlcNAc...) asparagine glycan is linked to Asn-333. Trp-364 and Asp-371 together coordinate substrate. The segment at 415-436 is disordered; the sequence is LRRRRRRPASSHRKTRLGSGGD. A compositionally biased stretch (basic residues) spans 416 to 430; the sequence is RRRRRRPASSHRKTR.

Belongs to the glycosyl hydrolase 5 (cellulase A) family. As to expression, expressed in seeds.

Its subcellular location is the secreted. The catalysed reaction is Random hydrolysis of (1-&gt;4)-beta-D-mannosidic linkages in mannans, galactomannans and glucomannans.. This chain is Mannan endo-1,4-beta-mannosidase 3 (MAN3), found in Oryza sativa subsp. japonica (Rice).